Reading from the N-terminus, the 75-residue chain is Putative membrane protein insertion efficiency factor (75 aa).

It belongs to the UPF0161 family.

The protein resides in the cell inner membrane. Its function is as follows. Could be involved in insertion of integral membrane proteins into the membrane. The polypeptide is Putative membrane protein insertion efficiency factor (Gloeothece citriformis (strain PCC 7424) (Cyanothece sp. (strain PCC 7424))).